The primary structure comprises 451 residues: Phenylalanine--tRNA ligase, mitochondrial (451 aa).

Substrate-binding positions include Ser-157–Gln-160, Arg-179, Gln-186–Tyr-188, and Gln-193–Glu-195. Lys-202 is subject to N6-acetyllysine. The substrate site is built by Glu-287 and Phe-312. The 93-residue stretch at Ser-358–Arg-450 folds into the FDX-ACB domain.

It belongs to the class-II aminoacyl-tRNA synthetase family. In terms of assembly, monomer.

It localises to the mitochondrion matrix. The protein localises to the mitochondrion. The enzyme catalyses tRNA(Phe) + L-phenylalanine + ATP = L-phenylalanyl-tRNA(Phe) + AMP + diphosphate + H(+). Its function is as follows. Is responsible for the charging of tRNA(Phe) with phenylalanine in mitochondrial translation. To a lesser extent, also catalyzes direct attachment of m-Tyr (an oxidized version of Phe) to tRNA(Phe), thereby opening the way for delivery of the misacylated tRNA to the ribosome and incorporation of ROS-damaged amino acid into proteins. The polypeptide is Phenylalanine--tRNA ligase, mitochondrial (FARS2) (Homo sapiens (Human)).